The primary structure comprises 879 residues: Fanconi anemia core complex-associated protein 100 (879 aa).

As to quaternary structure, belongs to the multisubunit FA complex composed of FANCA, FANCB, FANCC, FANCE, FANCF, FANCG, FANCL/PHF9, FANCM, FAAP24 and FAAP100. Forms a subcomplex with FANCB and FANCL.

Its subcellular location is the nucleus. Its function is as follows. Plays a role in Fanconi anemia-associated DNA damage response network. Regulates FANCD2 monoubiquitination and the stability of the FA core complex. Induces chromosomal instability as well as hypersensitivity to DNA cross-linking agents, when repressed. This is Fanconi anemia core complex-associated protein 100 from Mus musculus (Mouse).